The chain runs to 399 residues: Enoyl-[acyl-carrier-protein] reductase [NADH] (399 aa).

NAD(+) contacts are provided by residues 49–54 (GASSGY), 75–76 (FE), 112–113 (DA), and 141–142 (LA). Substrate is bound at residue Tyr227. The active-site Proton donor is the Tyr237. NAD(+) is bound by residues Lys246 and 272-274 (VVT).

It belongs to the TER reductase family. In terms of assembly, monomer.

The catalysed reaction is a 2,3-saturated acyl-[ACP] + NAD(+) = a (2E)-enoyl-[ACP] + NADH + H(+). It participates in lipid metabolism; fatty acid biosynthesis. Its function is as follows. Involved in the final reduction of the elongation cycle of fatty acid synthesis (FAS II). Catalyzes the reduction of a carbon-carbon double bond in an enoyl moiety that is covalently linked to an acyl carrier protein (ACP). The sequence is that of Enoyl-[acyl-carrier-protein] reductase [NADH] from Pseudomonas putida (strain W619).